Reading from the N-terminus, the 394-residue chain is Phosphopentomutase (394 aa).

Positions 15, 288, 293, 329, 330, and 341 each coordinate Mn(2+).

It belongs to the phosphopentomutase family. Mn(2+) serves as cofactor.

It is found in the cytoplasm. The enzyme catalyses 2-deoxy-alpha-D-ribose 1-phosphate = 2-deoxy-D-ribose 5-phosphate. It carries out the reaction alpha-D-ribose 1-phosphate = D-ribose 5-phosphate. It participates in carbohydrate degradation; 2-deoxy-D-ribose 1-phosphate degradation; D-glyceraldehyde 3-phosphate and acetaldehyde from 2-deoxy-alpha-D-ribose 1-phosphate: step 1/2. In terms of biological role, isomerase that catalyzes the conversion of deoxy-ribose 1-phosphate (dRib-1-P) and ribose 1-phosphate (Rib-1-P) to deoxy-ribose 5-phosphate (dRib-5-P) and ribose 5-phosphate (Rib-5-P), respectively. This is Phosphopentomutase from Bacillus licheniformis (strain ATCC 14580 / DSM 13 / JCM 2505 / CCUG 7422 / NBRC 12200 / NCIMB 9375 / NCTC 10341 / NRRL NRS-1264 / Gibson 46).